The following is a 556-amino-acid chain: uncharacterized protein (556 aa).

Residues 69–129 (RRGHTSGHAS…SSARSSSTSG (61 aa)) are disordered. 2 stretches are compositionally biased toward low complexity: residues 74-85 (SGHASEHTSSSR) and 93-129 (SMSSSSESDSDSVSSESNPKSYSDSSTSSARSSSTSG). The helical transmembrane segment at 379–399 (LGLYIFIGVLLGLIGVIGLFI) threads the bilayer. The segment at 498–541 (CTICLCEYSEESPLYRELPCHHIFHPACIDPYLLKNSDLCPLCK) adopts an RING-type; atypical zinc-finger fold.

It is found in the vacuole membrane. Its subcellular location is the cell membrane. This is an uncharacterized protein from Schizosaccharomyces pombe (strain 972 / ATCC 24843) (Fission yeast).